Reading from the N-terminus, the 224-residue chain is UPF0758 protein LCA_0852 (224 aa).

An MPN domain is found at 100–222; that stretch reads VVASSQMVGQ…YLSLREEGYL (123 aa). Positions 171, 173, and 184 each coordinate Zn(2+). A JAMM motif motif is present at residues 171–184; the sequence is HNHPSGQLAPSTQD.

It belongs to the UPF0758 family.

This is UPF0758 protein LCA_0852 from Latilactobacillus sakei subsp. sakei (strain 23K) (Lactobacillus sakei subsp. sakei).